We begin with the raw amino-acid sequence, 1093 residues long: ATP-dependent helicase/deoxyribonuclease subunit B (1093 aa).

It belongs to the helicase family. AddB/RexB type 2 subfamily. Heterodimer of AddA and RexB. Mg(2+) serves as cofactor.

Functionally, the heterodimer acts as both an ATP-dependent DNA helicase and an ATP-dependent, dual-direction single-stranded exonuclease. Recognizes the chi site generating a DNA molecule suitable for the initiation of homologous recombination. This subunit has 5' -&gt; 3' nuclease activity but not helicase activity. This is ATP-dependent helicase/deoxyribonuclease subunit B from Streptococcus sanguinis (strain SK36).